A 342-amino-acid chain; its full sequence is Heat-inducible transcription repressor HrcA (342 aa).

Belongs to the HrcA family.

Its function is as follows. Negative regulator of class I heat shock genes (grpE-dnaK-dnaJ and groELS operons). Prevents heat-shock induction of these operons. The protein is Heat-inducible transcription repressor HrcA of Acholeplasma laidlawii.